The sequence spans 221 residues: Large ribosomal subunit protein uL3 (221 aa).

It belongs to the universal ribosomal protein uL3 family. Part of the 50S ribosomal subunit. Forms a cluster with proteins L14 and L19.

In terms of biological role, one of the primary rRNA binding proteins, it binds directly near the 3'-end of the 23S rRNA, where it nucleates assembly of the 50S subunit. The chain is Large ribosomal subunit protein uL3 from Chlamydia felis (strain Fe/C-56) (Chlamydophila felis).